We begin with the raw amino-acid sequence, 249 residues long: Granaticin polyketide synthase putative ketoacyl reductase 2 (249 aa).

12–36 (LVTGSSSGIGQTVAQRLAAEGYRVV) provides a ligand contact to NAD(+). Position 144 (Ser144) interacts with substrate. The active-site Proton acceptor is the Tyr157.

Belongs to the short-chain dehydrogenases/reductases (SDR) family.

The protein operates within antibiotic biosynthesis; granaticin biosynthesis. The polypeptide is Granaticin polyketide synthase putative ketoacyl reductase 2 (gra-orf6) (Streptomyces violaceoruber).